An 809-amino-acid chain; its full sequence is MAYEASLIEKKWQKIWDENEYFEPKDDLNLPKKYILSMFPYPSGRIHMGHVRNYTIGDALARYYRKIGFNVLHPIGFDSFGMPAENAAIKHKIHPKSWTYENIAYMKKELFSLGFSFSKKRMLATSDPLYTKFEQEFFIKMFEKGLIYTKEANVNWCEQDQTVLANEQVEDGKCWRCGHEVAQKKMPGYYVKITAYAEELLKDLEELKDKWPNQVLTMQENWIGKSEGLEFSLNLDEESKQKTKESSLEVFTTRADTIYGVSYIALAPEHKIVQNLLSQNLLNQDVLNKIKAIQNQSPRERQSSEKEGYFLGIYAIHPLSGEKIPLWVANFILADYGSGAVMAVPAHDERDFEFATKYNLAIKQVIQTQENLPYTQKSGKLIHSQEFDNLDCNEARLKIISQFEAKNIGKRVVNFKIRDWGVSRQRYWGAPIPMIKCQSCGIVPQKLENLPITLPEDVQITGEGNPLDKHPTWKNCICPKCGKEAQKESDTLDTFFESSWYFARFASDEKTWQEKALDEKSVKYWMSVDQYIGGIEHAILHLLYARFFQKALRDLGYLTQNEPFDRLLTQGMVLKDGAKMSKSKGNVVDPDEIIEKYGADTARLFILFAAPPAKELEWNDDAVEGAYRFICKLYDRAQNVKKGELVELKQENLNKEEKYARLKVYEALKKSFEVYHQSFAFNTLIAACMEALNALALCKNEALEQEAFYIILNILEPIIPHVCFELSEELFKCKNFKKLELKEEVFVKDTLNLAVSINGKKRAEFEISSSASKEEILAFAKENTAKWLEGKSIVKEIYVEGKLVNLVIK.

The 'HIGH' region signature appears at 40–50 (PYPSGRIHMGH). The short motif at 579–583 (KMSKS) is the 'KMSKS' region element. ATP is bound at residue lysine 582.

This sequence belongs to the class-I aminoacyl-tRNA synthetase family.

The protein resides in the cytoplasm. The enzyme catalyses tRNA(Leu) + L-leucine + ATP = L-leucyl-tRNA(Leu) + AMP + diphosphate. The chain is Leucine--tRNA ligase from Campylobacter jejuni subsp. jejuni serotype O:23/36 (strain 81-176).